Consider the following 286-residue polypeptide: MDSPSTTANGWIDEHHQGVRYGLQGRVLVDETSPYQRITVIDSSRYGKGLLLDGCWMTAEHQERHYHESLVHPALCSAAQLERVLVIGGGDGGTARECLRYQDVKHLDMVEIDRRVVELSQKHLPSLGSHAWSDPRLQLNLENGIAWVANATESSYDVILIDGSDPAGPAEGLFNQTFFEHCRRILRPGGVFATQSESPEAFRQVHIDTVRLIRQVFGYADPLYGWVPMYPSGWWSWTFAAIDGPRYRNPLPARAAAISAGCEIWSPRWQQGAFEAIPAFIERELT.

Residues 9–242 (NGWIDEHHQG…GWWSWTFAAI (234 aa)) enclose the PABS domain. Residue Gln-36 coordinates S-methyl-5'-thioadenosine. His-67 and Asp-91 together coordinate spermidine. S-methyl-5'-thioadenosine contacts are provided by residues Glu-111 and 143-144 (NG). Residue Asp-162 is the Proton acceptor of the active site. Pro-169 provides a ligand contact to S-methyl-5'-thioadenosine.

It belongs to the spermidine/spermine synthase family. As to quaternary structure, homodimer or homotetramer.

It localises to the cytoplasm. It carries out the reaction S-adenosyl 3-(methylsulfanyl)propylamine + putrescine = S-methyl-5'-thioadenosine + spermidine + H(+). The protein operates within amine and polyamine biosynthesis; spermidine biosynthesis; spermidine from putrescine: step 1/1. In terms of biological role, catalyzes the irreversible transfer of a propylamine group from the amino donor S-adenosylmethioninamine (decarboxy-AdoMet) to putrescine (1,4-diaminobutane) to yield spermidine. The protein is Polyamine aminopropyltransferase of Prochlorococcus marinus (strain MIT 9313).